The primary structure comprises 193 residues: Small COPII coat GTPase SAR1 (193 aa).

The STAR; SAR1-N-terminal activation recruitment. Required for the activation and subsequent recruitment to ER membrane signature appears at 3–5; the sequence is FLW. The interval 11–15 is mediates recruitment to ER membranes; sequence VLNML. Aspartate 30 provides a ligand contact to Mg(2+). Asparagine 31, alanine 32, glycine 33, lysine 34, threonine 35, and threonine 36 together coordinate GDP. Residue asparagine 31 participates in GTP binding. The GTP site is built by glycine 33, lysine 34, threonine 35, and threonine 36. Aspartate 71 is a binding site for Mg(2+). Positions 130, 131, 133, 176, and 177 each coordinate GDP. 5 residues coordinate GTP: asparagine 130, lysine 131, aspartate 133, valine 176, and leucine 177.

The protein belongs to the small GTPase superfamily. SAR1 family. Homodimer; upon association with membrane. Part of the coat protein complex II/COPII, composed of SEC23/24 and SEC13/31 heterodimers, that it helps recruit and assemble on endoplasmic reticulum (ER) membranes at ER exit sites.

Its subcellular location is the endoplasmic reticulum membrane. It is found in the golgi apparatus. The protein localises to the golgi stack membrane. It localises to the cytoplasm. The protein resides in the cytosol. The catalysed reaction is GTP + H2O = GDP + phosphate + H(+). Small GTPases activation is mediated by guanine exchange factors (GEF), while inactivation through hydrolysis of the bound GTP is stimulated by GTPase activating proteins (GAP). Functionally, small GTPase that cycles between an active GTP-bound and an inactive GDP-bound state and mainly functions in vesicle-mediated endoplasmic reticulum (ER) to Golgi transport. The active GTP-bound form inserts into the endoplasmic reticulum membrane where it recruits the remainder of the coat protein complex II/COPII. The coat protein complex II assembling and polymerizing on endoplasmic reticulum membrane is responsible for both the sorting of cargos and the deformation and budding of membranes into vesicles destined to the Golgi. Plays a role in transporting the tyrosine kinase receptor let-23 from the endoplasmic reticulum to the plasma membrane of vulval precursor cells. In Caenorhabditis elegans, this protein is Small COPII coat GTPase SAR1.